Reading from the N-terminus, the 521-residue chain is DNA damage-binding protein cmr1 (521 aa).

The interval 36–75 (DKIIPKPAPPKPKRASTPRVKREPVKKEAARPTRQSSRLA) is disordered. The segment covering 55–66 (VKREPVKKEAAR) has biased composition (basic and acidic residues). 5 WD repeats span residues 183-224 (IVPQ…PKIE), 242-282 (THSR…STEI), 333-373 (LTDH…GKGD), 382-422 (EHES…EWKA), and 490-521 (DGIT…CLWM).

The protein belongs to the WD repeat DDB2/WDR76 family.

Its function is as follows. DNA-binding protein that binds to both single- and double-stranded DNA. Binds preferentially to UV-damaged DNA. May be involved in DNA-metabolic processes. This chain is DNA damage-binding protein cmr1, found in Neurospora crassa (strain ATCC 24698 / 74-OR23-1A / CBS 708.71 / DSM 1257 / FGSC 987).